Consider the following 304-residue polypeptide: NADH-cytochrome b5 reductase 2 (304 aa).

A helical transmembrane segment spans residues 9–29; sequence MLVALAVIGVTVLLFLIKALG. Residues 43 to 155 form the FAD-binding FR-type domain; it reads NAKYPLPLIE…RGPNGLLVYK (113 aa). FAD is bound by residues 135–150 and 174–209; these read DSLK…GPNG and VAKH…KCSL.

It belongs to the flavoprotein pyridine nucleotide cytochrome reductase family. Requires FAD as cofactor.

The protein localises to the membrane. The catalysed reaction is 2 Fe(III)-[cytochrome b5] + NADH = 2 Fe(II)-[cytochrome b5] + NAD(+) + H(+). NADH-cytochrome b5 reductases are involved in desaturation and elongation of fatty acids, cholesterol biosynthesis and drug metabolism. In Xenopus tropicalis (Western clawed frog), this protein is NADH-cytochrome b5 reductase 2 (cyb5r2).